The primary structure comprises 1182 residues: Intraflagellar transport protein 122 homolog (1182 aa).

8 WD repeats span residues 10-50 (KAEQ…QPLK), 51-91 (GHKD…LKYT), 93-129 (NDSI…VSKH), 131-169 (SSSK…KVKI), 174-217 (GSLS…IGKD), 219-258 (PLNF…LGTV), 260-300 (EQNS…HGLY), and 453-492 (KQAT…LLFQ).

In terms of assembly, component of the IFT complex A (IFT-A) complex. IFT-A complex is divided into a core subcomplex composed of IFT122:IFT140:WDR19 which is associated with TULP3 and a peripheral subcomplex composed of IFT43:WDR35:TTC21B. Interacts with IFT43:WDR35; the interaction connects the 2 IFT-A subcomplexes. Interacts with IFTAP; the interaction associates IFTAP with IFT-A complex.

The protein resides in the cell projection. It is found in the cilium. It localises to the cytoplasm. The protein localises to the cytoskeleton. Its subcellular location is the cilium basal body. Its function is as follows. As a component of the IFT complex A (IFT-A), a complex required for retrograde ciliary transport and entry into cilia of G protein-coupled receptors (GPCRs), it is required in ciliogenesis and ciliary protein trafficking. Involved in cilia formation during neuronal patterning. Acts as a negative regulator of Shh signaling. Required to recruit TULP3 to primary cilia. The protein is Intraflagellar transport protein 122 homolog of Mus musculus (Mouse).